We begin with the raw amino-acid sequence, 309 residues long: Homoserine kinase (309 aa).

Residue 95-105 (PQSRGLGSSAA) coordinates ATP.

It belongs to the GHMP kinase family. Homoserine kinase subfamily.

The protein resides in the cytoplasm. The enzyme catalyses L-homoserine + ATP = O-phospho-L-homoserine + ADP + H(+). It functions in the pathway amino-acid biosynthesis; L-threonine biosynthesis; L-threonine from L-aspartate: step 4/5. Its function is as follows. Catalyzes the ATP-dependent phosphorylation of L-homoserine to L-homoserine phosphate. In Corynebacterium efficiens (strain DSM 44549 / YS-314 / AJ 12310 / JCM 11189 / NBRC 100395), this protein is Homoserine kinase.